The primary structure comprises 339 residues: Catalase-related peroxidase (339 aa).

The N-terminal stretch at 1–31 is a signal peptide; sequence MIRIRNRWFRWLAIALASLVASIGIATVGFA. Residue His58 is part of the active site. Tyr328 is a heme binding site.

It belongs to the catalase family. Heme is required as a cofactor.

It is found in the periplasm. In terms of biological role, has an organic peroxide-dependent peroxidase activity. The sequence is that of Catalase-related peroxidase (srpA) from Synechococcus elongatus (strain ATCC 33912 / PCC 7942 / FACHB-805) (Anacystis nidulans R2).